The sequence spans 113 residues: U10-theraphotoxin-Hs2a (113 aa).

The first 21 residues, 1-21 (MNTVRVTFLLVFVLAVSLGQA), serve as a signal peptide directing secretion. Positions 22-67 (DEDGNRMEKRQKKTEAENLLLPKLEELDAKLWEEDSVESRNSRQKR) are excised as a propeptide. 3 disulfide bridges follow: C68–C86, C75–C91, and C85–C106.

Belongs to the neurotoxin 14 (magi-1) family. 02 (HWTX-XVIc) subfamily. In terms of tissue distribution, expressed by the venom gland.

The protein localises to the secreted. In terms of biological role, probable ion channel inhibitor. The chain is U10-theraphotoxin-Hs2a from Cyriopagopus schmidti (Chinese bird spider).